Reading from the N-terminus, the 246-residue chain is Phosphonates import ATP-binding protein PhnC (246 aa).

Positions 2–246 (IKFENVSKIY…ILDEVYRKEA (245 aa)) constitute an ABC transporter domain. ATP is bound at residue 35–42 (GTSGAGKS).

This sequence belongs to the ABC transporter superfamily. Phosphonates importer (TC 3.A.1.9.1) family. In terms of assembly, the complex is composed of two ATP-binding proteins (PhnC), two transmembrane proteins (PhnE) and a solute-binding protein (PhnD).

It is found in the cell membrane. It carries out the reaction phosphonate(out) + ATP + H2O = phosphonate(in) + ADP + phosphate + H(+). In terms of biological role, part of the ABC transporter complex PhnCDE involved in phosphonates import. Responsible for energy coupling to the transport system. The polypeptide is Phosphonates import ATP-binding protein PhnC (Lactococcus lactis subsp. lactis (strain IL1403) (Streptococcus lactis)).